Reading from the N-terminus, the 222-residue chain is Uracil-DNA glycosylase (222 aa).

The active-site Proton acceptor is the Asp-61.

It belongs to the uracil-DNA glycosylase (UDG) superfamily. UNG family.

It localises to the cytoplasm. The catalysed reaction is Hydrolyzes single-stranded DNA or mismatched double-stranded DNA and polynucleotides, releasing free uracil.. Functionally, excises uracil residues from the DNA which can arise as a result of misincorporation of dUMP residues by DNA polymerase or due to deamination of cytosine. The chain is Uracil-DNA glycosylase from Aeromonas salmonicida (strain A449).